Reading from the N-terminus, the 86-residue chain is Myosin light chain alkali (86 aa).

One can recognise an EF-hand domain in the interval 11 to 46 (GCYEDFIECLKLYDKEENGTMMLAELQHALLALGES).

In terms of assembly, myosin is a hexamer of 2 heavy chains and 4 light chains.

The sequence is that of Myosin light chain alkali (Mlc1) from Drosophila subobscura (Fruit fly).